Consider the following 92-residue polypeptide: Large ribosomal subunit protein uL24c (92 aa).

The protein belongs to the universal ribosomal protein uL24 family. As to quaternary structure, part of the 50S ribosomal subunit.

The protein resides in the plastid. Its subcellular location is the chloroplast. Functionally, one of two assembly initiator proteins, it binds directly to the 5'-end of the 23S rRNA, where it nucleates assembly of the 50S subunit. The polypeptide is Large ribosomal subunit protein uL24c (rpl24) (Gracilaria tenuistipitata var. liui (Red alga)).